Here is a 169-residue protein sequence, read N- to C-terminus: MSQDFVEIAKIGATYKLNGELNLYPLANSIETLLSYGDWYIQLPATNVWQQLKGESVLKRADKVYIKLANINNADTAKKYVNALIGVPKRALPQLAEDEVYFKDLIGCSVKNINNDSFGVVVDIIETGANEVLVCKEDNSEYLIPYVKQYIVSEDLNSKKIVVDWEYDY.

The region spanning 97 to 169 is the PRC barrel domain; the sequence is EDEVYFKDLI…KIVVDWEYDY (73 aa).

This sequence belongs to the RimM family. In terms of assembly, binds ribosomal protein uS19.

The protein resides in the cytoplasm. In terms of biological role, an accessory protein needed during the final step in the assembly of 30S ribosomal subunit, possibly for assembly of the head region. Essential for efficient processing of 16S rRNA. May be needed both before and after RbfA during the maturation of 16S rRNA. It has affinity for free ribosomal 30S subunits but not for 70S ribosomes. The chain is Ribosome maturation factor RimM from Francisella tularensis subsp. holarctica (strain FTNF002-00 / FTA).